Here is a 125-residue protein sequence, read N- to C-terminus: Protein JAZ13 (125 aa).

An EAR motif is present at residues 6 to 10 (LDLHL). Residues 99–125 (KKRSKSFTLTPNYTSSTSSSSSSLHNF) form a disordered region. Residues 112-125 (TSSTSSSSSSLHNF) are compositionally biased toward low complexity.

Monomer. Lack of homodimerization, and very weak or no interaction with AFPH2/NINJA and other JAZ proteins. Interacts (via EAR motif) with TPL. Interacts (via jas motif) with MYC2. In terms of processing, phosphorylated at multiple serine residues.

Non-TIFY functional repressor of jasmonate (JA)-mediated growth and defense responses. Intrinsically resistant to JA-induced turnover, probably due to the absence of the canonical degron that strongly interacts with COI1 in the presence of JA-Ile in the TIFY/JAZ proteins. In Arabidopsis thaliana (Mouse-ear cress), this protein is Protein JAZ13.